Consider the following 484-residue polypeptide: tRNA-2-methylthio-N(6)-dimethylallyladenosine synthase (484 aa).

In terms of domain architecture, MTTase N-terminal spans 36–153 (GKLYIKTHGC…LPELIRARRE (118 aa)). [4Fe-4S] cluster is bound by residues C45, C82, C116, C190, C194, and C197. Residues 176 to 415 (RAEGPSAFVS…HISAHAASIS (240 aa)) form the Radical SAM core domain. In terms of domain architecture, TRAM spans 416-479 (QSMVGSVQRV…SNSLRGRIQL (64 aa)). Positions 428–450 (EGPSRRDPNELTGKSENMRPVNF) are disordered.

The protein belongs to the methylthiotransferase family. MiaB subfamily. As to quaternary structure, monomer. [4Fe-4S] cluster is required as a cofactor.

It is found in the cytoplasm. The catalysed reaction is N(6)-dimethylallyladenosine(37) in tRNA + (sulfur carrier)-SH + AH2 + 2 S-adenosyl-L-methionine = 2-methylsulfanyl-N(6)-dimethylallyladenosine(37) in tRNA + (sulfur carrier)-H + 5'-deoxyadenosine + L-methionine + A + S-adenosyl-L-homocysteine + 2 H(+). Its function is as follows. Catalyzes the methylthiolation of N6-(dimethylallyl)adenosine (i(6)A), leading to the formation of 2-methylthio-N6-(dimethylallyl)adenosine (ms(2)i(6)A) at position 37 in tRNAs that read codons beginning with uridine. The protein is tRNA-2-methylthio-N(6)-dimethylallyladenosine synthase of Xanthomonas oryzae pv. oryzae (strain PXO99A).